The chain runs to 639 residues: Chaperone protein DnaK (639 aa).

Position 198 is a phosphothreonine; by autocatalysis (Thr-198). The interval 605-624 is disordered; it reads SQAQGGAETNAGKQANAAAD.

This sequence belongs to the heat shock protein 70 family.

Its function is as follows. Acts as a chaperone. The protein is Chaperone protein DnaK of Shewanella putrefaciens (strain CN-32 / ATCC BAA-453).